Here is an 837-residue protein sequence, read N- to C-terminus: CoA-transferase/lyase DddD (837 aa).

Residue Asp602 is the Nucleophile of the active site.

This sequence belongs to the CoA-transferase III family.

In terms of biological role, dimethyl sulfide (DMS)-producing enzyme. Acts both as a transferase and a lyase: uses acetyl-coenzyme A (acetyl-coA) and dimethylsulfoniopropionate (DMSP) as substrates to produce DMS, acetate and 3-hydroxypropionate-CoA (3HP-CoA). Mediates the CoA-transferase prior to lyase activity. DMS is the principal form by which sulfur is transported from oceans to the atmosphere and is a key component of the ocean sulfur cycle. In Marinomonas sp. (strain MWYL1), this protein is CoA-transferase/lyase DddD.